A 926-amino-acid chain; its full sequence is Periplasmic nitrate reductase (926 aa).

The tat-type signal signal peptide spans 1–30 (MNRRDFIKSAAASAACASAGIAIPANLSAA). The 4Fe-4S Mo/W bis-MGD-type domain maps to 37–93 (WRWDKAACRFCGTGCGIMVATKEGKIVAVKGDPEAPVNRGLNCIKGYFNAKIMYGED). Cysteine 44, cysteine 47, cysteine 51, and cysteine 79 together coordinate [4Fe-4S] cluster. Residues lysine 81, glutamine 149, asparagine 174, cysteine 178, 211-218 (WGANMAEM), methionine 419, glutamine 423, asparagine 529, 554-555 (SD), lysine 577, aspartate 604, and 816-825 (TGRVLEHWHS) each bind Mo-bis(molybdopterin guanine dinucleotide). Tryptophan 892 contributes to the substrate binding site. Mo-bis(molybdopterin guanine dinucleotide) is bound by residues asparagine 900 and lysine 917.

It belongs to the prokaryotic molybdopterin-containing oxidoreductase family. NasA/NapA/NarB subfamily. Component of the periplasmic nitrate reductase NapAB complex composed of NapA and NapB. [4Fe-4S] cluster is required as a cofactor. The cofactor is Mo-bis(molybdopterin guanine dinucleotide). Post-translationally, predicted to be exported by the Tat system. The position of the signal peptide cleavage has not been experimentally proven.

It is found in the periplasm. It catalyses the reaction 2 Fe(II)-[cytochrome] + nitrate + 2 H(+) = 2 Fe(III)-[cytochrome] + nitrite + H2O. Catalytic subunit of the periplasmic nitrate reductase complex NapAB. Receives electrons from NapB and catalyzes the reduction of nitrate to nitrite. This chain is Periplasmic nitrate reductase, found in Campylobacter curvus (strain 525.92).